A 360-amino-acid polypeptide reads, in one-letter code: Phospho-N-acetylmuramoyl-pentapeptide-transferase (360 aa).

A run of 10 helical transmembrane segments spans residues 21-41 (YITV…LWIG), 73-93 (TMGG…WANL), 94-114 (ANSY…IGFV), 132-152 (WKYF…YWLG), 168-188 (IMPQ…VGTG), 199-219 (GLAI…AWAT), 239-259 (VVVF…FNTY), 263-283 (VFMG…VAIL), 288-308 (FLLV…ILQV), and 338-358 (VIIR…VTLK).

This sequence belongs to the glycosyltransferase 4 family. MraY subfamily. The cofactor is Mg(2+).

It localises to the cell inner membrane. The catalysed reaction is UDP-N-acetyl-alpha-D-muramoyl-L-alanyl-gamma-D-glutamyl-meso-2,6-diaminopimeloyl-D-alanyl-D-alanine + di-trans,octa-cis-undecaprenyl phosphate = di-trans,octa-cis-undecaprenyl diphospho-N-acetyl-alpha-D-muramoyl-L-alanyl-D-glutamyl-meso-2,6-diaminopimeloyl-D-alanyl-D-alanine + UMP. The protein operates within cell wall biogenesis; peptidoglycan biosynthesis. In terms of biological role, catalyzes the initial step of the lipid cycle reactions in the biosynthesis of the cell wall peptidoglycan: transfers peptidoglycan precursor phospho-MurNAc-pentapeptide from UDP-MurNAc-pentapeptide onto the lipid carrier undecaprenyl phosphate, yielding undecaprenyl-pyrophosphoryl-MurNAc-pentapeptide, known as lipid I. In Haemophilus influenzae (strain 86-028NP), this protein is Phospho-N-acetylmuramoyl-pentapeptide-transferase.